The following is a 558-amino-acid chain: Hepatocyte nuclear factor 1-beta (558 aa).

The dimerization stretch occupies residues 1–31 (MVSKLTSLQQELLSALLSSGVTKEVLIQALE). The HNF-p1 domain occupies 1 to 32 (MVSKLTSLQQELLSALLSSGVTKEVLIQALEE). A phosphoserine mark is found at S49, S52, S75, and S80. Residues 66–85 (TNGHAKGRLSGDEGSEDGDD) are disordered. Residues 93–188 (KELQALNTEE…ILRQFNQTVQ (96 aa)) enclose the POU-specific atypical domain. A DNA-binding region (homeobox; HNF1-type) is located at residues 231 to 311 (MRRNRFKWGP…NRRKEEAFRQ (81 aa)). Positions 323–348 (THNLNPLLTHGSPHHQPSSSPPNKMS) are disordered.

Belongs to the HNF1 homeobox family. Binds DNA as a dimer. Can form homodimer or heterodimer with HNF1-alpha. Interacts (via HNF-p1 domain) with PCBD1; the interaction increases its transactivation activity.

It localises to the nucleus. Its function is as follows. Transcription factor that binds to the inverted palindrome 5'-GTTAATNATTAAC-3'. Binds to the FPC element in the cAMP regulatory unit of the PLAU gene. Transcriptional activity is increased by coactivator PCBD1. The sequence is that of Hepatocyte nuclear factor 1-beta (Hnf1b) from Mus musculus (Mouse).